The primary structure comprises 509 residues: Maturase K (509 aa).

The protein belongs to the intron maturase 2 family. MatK subfamily.

Its subcellular location is the plastid. It is found in the chloroplast. Usually encoded in the trnK tRNA gene intron. Probably assists in splicing its own and other chloroplast group II introns. The sequence is that of Maturase K from Stylosanthes hamata (Caribbean stylo).